A 399-amino-acid chain; its full sequence is Leu/Ile/Val-binding protein homolog 7 (399 aa).

The N-terminal stretch at 1-22 is a signal peptide; it reads MEKHLIALSVAALLAGAAPASA.

This sequence belongs to the leucine-binding protein family.

In terms of biological role, component of an amino-acid transport system. This is Leu/Ile/Val-binding protein homolog 7 from Brucella suis biovar 1 (strain 1330).